We begin with the raw amino-acid sequence, 405 residues long: mRNA cap guanine-N(7) methyltransferase (405 aa).

Residues 1-78 form a disordered region; it reads MDNILNPEDN…PRLEEGHGSL (78 aa). Polar residues-rich tracts occupy residues 9–18 and 36–45; these read DNVSQTNTET and KFTASGQNLD. A compositionally biased stretch (basic and acidic residues) spans 58-75; sequence KAGEPESPSKRPRLEEGH. Residues 97–404 enclose the mRNA cap 0 methyltransferase domain; the sequence is SRIFHLRNFN…IYLLFAFEKQ (308 aa). MRNA is bound at residue 106-107; sequence NN. Positions 110, 134, 156, 190, 213, and 218 each coordinate S-adenosyl-L-methionine.

It belongs to the class I-like SAM-binding methyltransferase superfamily. mRNA cap 0 methyltransferase family.

The protein resides in the nucleus. The catalysed reaction is a 5'-end (5'-triphosphoguanosine)-ribonucleoside in mRNA + S-adenosyl-L-methionine = a 5'-end (N(7)-methyl 5'-triphosphoguanosine)-ribonucleoside in mRNA + S-adenosyl-L-homocysteine. Its function is as follows. Catalytic subunit of the mRNA-capping methyltransferase RNMT:RAMAC complex that methylates the N7 position of the added guanosine to the 5'-cap structure of mRNAs. Binds RNA containing 5'-terminal GpppC. The polypeptide is mRNA cap guanine-N(7) methyltransferase (rnmt) (Xenopus tropicalis (Western clawed frog)).